The chain runs to 228 residues: Octanoyltransferase (228 aa).

Residues glutamate 31–phenylalanine 212 form the BPL/LPL catalytic domain. Substrate-binding positions include arginine 76 to histidine 83, alanine 143 to glycine 145, and glycine 156 to alanine 158. Cysteine 174 acts as the Acyl-thioester intermediate in catalysis.

Belongs to the LipB family.

The protein resides in the cytoplasm. It catalyses the reaction octanoyl-[ACP] + L-lysyl-[protein] = N(6)-octanoyl-L-lysyl-[protein] + holo-[ACP] + H(+). The protein operates within protein modification; protein lipoylation via endogenous pathway; protein N(6)-(lipoyl)lysine from octanoyl-[acyl-carrier-protein]: step 1/2. Functionally, catalyzes the transfer of endogenously produced octanoic acid from octanoyl-acyl-carrier-protein onto the lipoyl domains of lipoate-dependent enzymes. Lipoyl-ACP can also act as a substrate although octanoyl-ACP is likely to be the physiological substrate. The chain is Octanoyltransferase from Caldanaerobacter subterraneus subsp. tengcongensis (strain DSM 15242 / JCM 11007 / NBRC 100824 / MB4) (Thermoanaerobacter tengcongensis).